We begin with the raw amino-acid sequence, 267 residues long: Triosephosphate isomerase (267 aa).

12 to 14 (NWK) is a binding site for substrate. Catalysis depends on histidine 104, which acts as the Electrophile. Catalysis depends on glutamate 176, which acts as the Proton acceptor. Residues glycine 182, serine 222, and 243–244 (GG) each bind substrate.

This sequence belongs to the triosephosphate isomerase family. In terms of assembly, homodimer.

It is found in the cytoplasm. It catalyses the reaction D-glyceraldehyde 3-phosphate = dihydroxyacetone phosphate. It participates in carbohydrate biosynthesis; gluconeogenesis. It functions in the pathway carbohydrate degradation; glycolysis; D-glyceraldehyde 3-phosphate from glycerone phosphate: step 1/1. Functionally, involved in the gluconeogenesis. Catalyzes stereospecifically the conversion of dihydroxyacetone phosphate (DHAP) to D-glyceraldehyde-3-phosphate (G3P). The polypeptide is Triosephosphate isomerase (Bifidobacterium longum (strain DJO10A)).